We begin with the raw amino-acid sequence, 271 residues long: Inactive phospholipid phosphatase 7 (271 aa).

Residues 1–69 (MPVSQSRARA…RQSQQLPEED (69 aa)) are disordered. Residues 1–112 (MPVSQSRARA…AASWASARSM (112 aa)) lie on the Cytoplasmic side of the membrane. Over residues 24–36 (SLNQPPKGTQEPR) the composition is skewed to polar residues. Residues Ser43 and Ser62 each carry the phosphoserine modification. The segment at 70 to 91 (CMQLNPSFKGIAFNSLLAIDIC) is interaction with MTOR. Residues 113–133 (VKLIGITSHGIPWIGGTILCL) traverse the membrane as a helical segment. The Extracellular portion of the chain corresponds to 134 to 141 (VRSSTLAG). The helical transmembrane segment at 142–162 (QEVLMNLLLALLLDIMTVAGV) threads the bilayer. Residues 163–202 (QKLIKRRGPYETSPGLLDYLTMDIYAFPAGHASRAAMVSK) are Cytoplasmic-facing. Residues 203–223 (FFLSHLVLAVPLRVLLVLWAF) traverse the membrane as a helical segment. The Extracellular segment spans residues 224–239 (CVGLSRVMIGRHHITD). The helical transmembrane segment at 240 to 260 (VISGFIIGYFQFRLVELVWMS) threads the bilayer. The Cytoplasmic portion of the chain corresponds to 261–271 (SNTCQMLISAW).

It belongs to the PA-phosphatase related phosphoesterase family. In terms of assembly, homo- and heterooligomer. Interacts with MTOR; controls MTOR-dependent IGF2 expression during myoblast differentiation.

Its subcellular location is the nucleus envelope. It is found in the endoplasmic reticulum membrane. It localises to the membrane. Its function is as follows. Plays a role as negative regulator of myoblast differentiation, in part through effects on MTOR signaling. Has no detectable enzymatic activity. The chain is Inactive phospholipid phosphatase 7 from Rattus norvegicus (Rat).